A 238-amino-acid polypeptide reads, in one-letter code: Flagellar L-ring protein (238 aa).

Positions 1–17 (MIRKTLAASCAVLLMAG) are cleaved as a signal peptide. The N-palmitoyl cysteine moiety is linked to residue cysteine 18. Cysteine 18 carries S-diacylglycerol cysteine lipidation.

Belongs to the FlgH family. In terms of assembly, the basal body constitutes a major portion of the flagellar organelle and consists of four rings (L,P,S, and M) mounted on a central rod.

It localises to the cell outer membrane. Its subcellular location is the bacterial flagellum basal body. Its function is as follows. Assembles around the rod to form the L-ring and probably protects the motor/basal body from shearing forces during rotation. In Nitratidesulfovibrio vulgaris (strain ATCC 29579 / DSM 644 / CCUG 34227 / NCIMB 8303 / VKM B-1760 / Hildenborough) (Desulfovibrio vulgaris), this protein is Flagellar L-ring protein.